The chain runs to 899 residues: Proline-rich transmembrane protein 4 (899 aa).

Residues 1-23 (MARHGCLGLGLFCCVLFAATVGP) form the signal peptide. Disordered stretches follow at residues 110–152 (LTEW…RRST) and 295–340 (TVPI…PEAP). 5 helical membrane passes run 370-390 (VGALFGLVALLALLALALLPW), 392-412 (CPPGAPCLALLDLLLLSAGTT), 430-450 (ALAWLLLQDLPLPCLAAGLGL), 467-487 (LAALLLLGLGLAAAAALGSAA), and 500-520 (GLHAFLAAFLSGLLLALSCWG). The residue at position 641 (Ser-641) is a Phosphoserine. Disordered stretches follow at residues 769-797 (TGGRASERSGEASGPAAPPELPSPGAWPA) and 839-869 (PSGSSPSLPASGSYQALSPPSRDSPEPASEL). Residues 840–851 (SGSSPSLPASGS) are compositionally biased toward low complexity.

It is found in the membrane. This Homo sapiens (Human) protein is Proline-rich transmembrane protein 4 (PRRT4).